Reading from the N-terminus, the 476-residue chain is NADH-quinone oxidoreductase subunit N (476 aa).

14 helical membrane-spanning segments follow: residues 10 to 30, 42 to 62, 77 to 97, 108 to 128, 129 to 149, 162 to 182, 202 to 222, 234 to 254, 268 to 288, 296 to 316, 323 to 343, 368 to 388, 392 to 412, and 445 to 465; these read AVLP…IGAI, LAIA…AVTI, FMKV…VDWL, AVLV…GDLI, ALYL…AINR, FVLG…IYGF, LVFG…AVPF, PTPV…AVFV, WQQI…FAAI, LLAY…AAGT, VLLY…CVLA, ALAL…AGFV, YVFL…GVVA, and AVLA…TPLI.

It belongs to the complex I subunit 2 family. In terms of assembly, NDH-1 is composed of 14 different subunits. Subunits NuoA, H, J, K, L, M, N constitute the membrane sector of the complex.

It localises to the cell inner membrane. The enzyme catalyses a quinone + NADH + 5 H(+)(in) = a quinol + NAD(+) + 4 H(+)(out). Functionally, NDH-1 shuttles electrons from NADH, via FMN and iron-sulfur (Fe-S) centers, to quinones in the respiratory chain. The immediate electron acceptor for the enzyme in this species is believed to be ubiquinone. Couples the redox reaction to proton translocation (for every two electrons transferred, four hydrogen ions are translocated across the cytoplasmic membrane), and thus conserves the redox energy in a proton gradient. This chain is NADH-quinone oxidoreductase subunit N, found in Azorhizobium caulinodans (strain ATCC 43989 / DSM 5975 / JCM 20966 / LMG 6465 / NBRC 14845 / NCIMB 13405 / ORS 571).